The sequence spans 126 residues: Probable 4-amino-4-deoxy-L-arabinose-phosphoundecaprenol flippase subunit ArnF (126 aa).

Residues 1 to 21 (MGFLWALFSVGLVSAAQLLLR) traverse the membrane as a helical segment. Residues 22–47 (SAMVALPPLTDIVAFLQHLLHFQPGT) lie on the Periplasmic side of the membrane. Residues 48–68 (VGLFFGLLGYLLSMVCWYFAL) traverse the membrane as a helical segment. Over 69–76 (HRLPLSKA) the chain is Cytoplasmic. The helical transmembrane segment at 77 to 97 (YALLSLSYILVWAAAIWLPGW) threads the bilayer. The Periplasmic portion of the chain corresponds to 98 to 100 (HEP). Residues 101-121 (FYWQSLLGVTIIVAGVLTIFW) form a helical membrane-spanning segment. At 122–126 (PVKRR) the chain is on the cytoplasmic side.

This sequence belongs to the ArnF family. As to quaternary structure, heterodimer of ArnE and ArnF.

It localises to the cell inner membrane. It functions in the pathway bacterial outer membrane biogenesis; lipopolysaccharide biosynthesis. In terms of biological role, translocates 4-amino-4-deoxy-L-arabinose-phosphoundecaprenol (alpha-L-Ara4N-phosphoundecaprenol) from the cytoplasmic to the periplasmic side of the inner membrane. This chain is Probable 4-amino-4-deoxy-L-arabinose-phosphoundecaprenol flippase subunit ArnF, found in Klebsiella pneumoniae (strain 342).